The sequence spans 285 residues: Tryptophan synthase alpha chain (285 aa).

Catalysis depends on proton acceptor residues Glu53 and Asp64.

This sequence belongs to the TrpA family. In terms of assembly, tetramer of two alpha and two beta chains.

The enzyme catalyses (1S,2R)-1-C-(indol-3-yl)glycerol 3-phosphate + L-serine = D-glyceraldehyde 3-phosphate + L-tryptophan + H2O. It functions in the pathway amino-acid biosynthesis; L-tryptophan biosynthesis; L-tryptophan from chorismate: step 5/5. The alpha subunit is responsible for the aldol cleavage of indoleglycerol phosphate to indole and glyceraldehyde 3-phosphate. The protein is Tryptophan synthase alpha chain of Bordetella parapertussis (strain 12822 / ATCC BAA-587 / NCTC 13253).